Reading from the N-terminus, the 223-residue chain is Ribonuclease 3 (223 aa).

The RNase III domain occupies 1 to 131 (MDGVDELLLR…LIGAVMVDQG (131 aa)). Residue Glu-44 participates in Mg(2+) binding. Asp-48 is an active-site residue. Mg(2+) contacts are provided by Asp-117 and Glu-120. The active site involves Glu-120. In terms of domain architecture, DRBM spans 157 to 220 (DPKTKLQKLT…AMSALASLEN (64 aa)).

It belongs to the ribonuclease III family. As to quaternary structure, homodimer. The cofactor is Mg(2+).

The protein localises to the cytoplasm. It carries out the reaction Endonucleolytic cleavage to 5'-phosphomonoester.. In terms of biological role, digests double-stranded RNA. Involved in the processing of primary rRNA transcript to yield the immediate precursors to the large and small rRNAs (23S and 16S). Processes some mRNAs, and tRNAs when they are encoded in the rRNA operon. Processes pre-crRNA and tracrRNA of type II CRISPR loci if present in the organism. The chain is Ribonuclease 3 from Tropheryma whipplei (strain Twist) (Whipple's bacillus).